Reading from the N-terminus, the 687-residue chain is Polyphosphate kinase (687 aa).

N45 lines the ATP pocket. 2 residues coordinate Mg(2+): R375 and R405. The active-site Phosphohistidine intermediate is H435. The ATP site is built by Y472, R568, and H596.

It belongs to the polyphosphate kinase 1 (PPK1) family. Mg(2+) is required as a cofactor. In terms of processing, an intermediate of this reaction is the autophosphorylated ppk in which a phosphate is covalently linked to a histidine residue through a N-P bond.

It catalyses the reaction [phosphate](n) + ATP = [phosphate](n+1) + ADP. Catalyzes the reversible transfer of the terminal phosphate of ATP to form a long-chain polyphosphate (polyP). The sequence is that of Polyphosphate kinase from Burkholderia ambifaria (strain ATCC BAA-244 / DSM 16087 / CCUG 44356 / LMG 19182 / AMMD) (Burkholderia cepacia (strain AMMD)).